Here is a 152-residue protein sequence, read N- to C-terminus: Large ribosomal subunit protein bL9 (152 aa).

This sequence belongs to the bacterial ribosomal protein bL9 family.

In terms of biological role, binds to the 23S rRNA. The sequence is that of Large ribosomal subunit protein bL9 from Mycobacterium sp. (strain JLS).